The primary structure comprises 308 residues: Olfactory receptor 6F1 (308 aa).

The Extracellular segment spans residues methionine 1 to leucine 25. An N-linked (GlcNAc...) asparagine glycan is attached at asparagine 5. Residues serine 26 to leucine 46 traverse the membrane as a helical segment. Residues methionine 47–glutamine 54 are Cytoplasmic-facing. A helical transmembrane segment spans residues leucine 55–threonine 75. Over alanine 76–leucine 99 the chain is Extracellular. A disulfide bond links cysteine 97 and cysteine 189. The helical transmembrane segment at glutamine 100 to tyrosine 120 threads the bilayer. Topologically, residues aspartate 121–leucine 139 are cytoplasmic. The chain crosses the membrane as a helical span at residues leucine 140–threonine 160. Residues alanine 161–leucine 197 are Extracellular-facing. A helical membrane pass occupies residues valine 198–serine 217. The Cytoplasmic portion of the chain corresponds to tyrosine 218–alanine 237. The helical transmembrane segment at phenylalanine 238–leucine 258 threads the bilayer. At histidine 259–isoleucine 271 the chain is on the extracellular side. A helical membrane pass occupies residues lysine 272–leucine 292. Residues arginine 293–lysine 308 lie on the Cytoplasmic side of the membrane.

Belongs to the G-protein coupled receptor 1 family.

It localises to the cell membrane. Functionally, odorant receptor. This Homo sapiens (Human) protein is Olfactory receptor 6F1 (OR6F1).